Here is a 343-residue protein sequence, read N- to C-terminus: Cilia- and flagella-associated protein 36 (343 aa).

Residues serine 85 and serine 147 each carry the phosphoserine modification. Positions 147 to 187 (SDLEQEEMKILREVLRKSKEEYDQEEERKRKKQSSEAKMEE) form a coiled coil. The tract at residues 165–188 (KEEYDQEEERKRKKQSSEAKMEEL) is disordered. Serine 201 is modified (phosphoserine). Composition is skewed to basic and acidic residues over residues 279-293 (QKRDKLLSMRKDTRT) and 301-323 (QKGKPTREAEEMTEKPEMTAEEK). Residues 279–323 (QKRDKLLSMRKDTRTKQIQNTEQKGKPTREAEEMTEKPEMTAEEK) form a disordered region.

The protein belongs to the CFAP36 family. As to quaternary structure, interacts with ARL3.

It localises to the nucleus. It is found in the cytoplasm. Its subcellular location is the cell projection. The protein resides in the cilium. The protein localises to the flagellum. May act as an effector for ARL3. The protein is Cilia- and flagella-associated protein 36 of Mus musculus (Mouse).